We begin with the raw amino-acid sequence, 366 residues long: N-acetyl-6-hydroxytryptophan oxidase ivoB (366 aa).

Positions 1 to 18 (MHLLSSLAALAAAITVAF) are cleaved as a signal peptide. N-linked (GlcNAc...) asparagine glycosylation is found at N28 and N81. 2 residues coordinate Cu cation: H87 and H96. N-linked (GlcNAc...) asparagine glycosylation is found at N114 and N121. H291 contributes to the Cu cation binding site. N319 is a glycosylation site (N-linked (GlcNAc...) asparagine).

This sequence belongs to the tyrosinase family. The cofactor is Cu(2+).

The protein operates within pigment biosynthesis. Its activity is regulated as follows. Activity is inhibited by 2,3-dihydroxynaphthalene, phenylhydrazine, diethyl dithiocarbamate and 8-hydroxyquinolene. In terms of biological role, nonribosomal peptide synthetase; part of the pathway that mediates the biosynthesis of the gray-brown conidiophore pigment. The first step of the pathway is performed by the nonribosomal peptide synthetase ivoA that catalyzes ATP-dependent unidirectional stereoinversion of L-tryptophan to D-tryptophan with complete conversion. While the stereoinversion is catalyzed by the epimerization (E) domain of ivoA, the terminal condensation (C) domain stereoselectively hydrolyzes D-tryptophanyl-S-phosphopantetheine thioester and thus represents a non-canonical C domain function. D-tryptophan is acetylated, probably by an endogenous acetyltransferase. N-acetyltryptophan is further 6-hydroxylated into N-acetyl-6-hydroxytryptophan (AHT) by the cytochrome P450 monooxygenase ivoC. N-acetyl-6-hydroxytryptophan is substrate of the N-acetyl-6-hydroxytryptophan oxidase ivoB to produce the gray-brown conidiophore pigment. This chain is N-acetyl-6-hydroxytryptophan oxidase ivoB, found in Emericella nidulans (strain FGSC A4 / ATCC 38163 / CBS 112.46 / NRRL 194 / M139) (Aspergillus nidulans).